A 232-amino-acid chain; its full sequence is Ubiquinone biosynthesis O-methyltransferase (232 aa).

The S-adenosyl-L-methionine site is built by R36, G55, D76, and M120.

It belongs to the methyltransferase superfamily. UbiG/COQ3 family.

It catalyses the reaction a 3-demethylubiquinol + S-adenosyl-L-methionine = a ubiquinol + S-adenosyl-L-homocysteine + H(+). It carries out the reaction a 3-(all-trans-polyprenyl)benzene-1,2-diol + S-adenosyl-L-methionine = a 2-methoxy-6-(all-trans-polyprenyl)phenol + S-adenosyl-L-homocysteine + H(+). It participates in cofactor biosynthesis; ubiquinone biosynthesis. Its function is as follows. O-methyltransferase that catalyzes the 2 O-methylation steps in the ubiquinone biosynthetic pathway. The polypeptide is Ubiquinone biosynthesis O-methyltransferase (Thiobacillus denitrificans (strain ATCC 25259 / T1)).